The primary structure comprises 214 residues: Probable nicotinate-nucleotide adenylyltransferase (214 aa).

Belongs to the NadD family.

The catalysed reaction is nicotinate beta-D-ribonucleotide + ATP + H(+) = deamido-NAD(+) + diphosphate. It functions in the pathway cofactor biosynthesis; NAD(+) biosynthesis; deamido-NAD(+) from nicotinate D-ribonucleotide: step 1/1. Its function is as follows. Catalyzes the reversible adenylation of nicotinate mononucleotide (NaMN) to nicotinic acid adenine dinucleotide (NaAD). This Aeromonas salmonicida (strain A449) protein is Probable nicotinate-nucleotide adenylyltransferase.